A 100-amino-acid chain; its full sequence is Putative pterin-4-alpha-carbinolamine dehydratase (100 aa).

This sequence belongs to the pterin-4-alpha-carbinolamine dehydratase family.

The enzyme catalyses (4aS,6R)-4a-hydroxy-L-erythro-5,6,7,8-tetrahydrobiopterin = (6R)-L-erythro-6,7-dihydrobiopterin + H2O. This Rhodopseudomonas palustris (strain ATCC BAA-98 / CGA009) protein is Putative pterin-4-alpha-carbinolamine dehydratase.